The following is a 170-amino-acid chain: Large ribosomal subunit protein uL11 (170 aa).

This sequence belongs to the universal ribosomal protein uL11 family. As to quaternary structure, part of the ribosomal stalk of the 50S ribosomal subunit. Interacts with L10 and the large rRNA to form the base of the stalk. L10 forms an elongated spine to which L12 dimers bind in a sequential fashion forming a multimeric L10(L12)X complex.

Functionally, forms part of the ribosomal stalk which helps the ribosome interact with GTP-bound translation factors. The protein is Large ribosomal subunit protein uL11 of Sulfolobus acidocaldarius (strain ATCC 33909 / DSM 639 / JCM 8929 / NBRC 15157 / NCIMB 11770).